A 526-amino-acid polypeptide reads, in one-letter code: Meiotically up-regulated gene 99 protein, mitochondrial (526 aa).

The next 2 helical transmembrane spans lie at 398-418 and 421-441; these read TLYTTAFQGLGALGSLYLYFV and FSLYNAFSVFSVCGVFGLYYL.

Its subcellular location is the mitochondrion membrane. In terms of biological role, required for correct meiotic chromosome segregation. Appears to also have role in sporulation. The chain is Meiotically up-regulated gene 99 protein, mitochondrial (mug99) from Schizosaccharomyces pombe (strain 972 / ATCC 24843) (Fission yeast).